The sequence spans 147 residues: Ribonuclease 4 (147 aa).

Positions 1–28 (MALQRTHSLLLLLLLTLLGLGLVQPSYG) are cleaved as a signal peptide. Glutamine 29 carries the pyrrolidone carboxylic acid modification. Residues arginine 35, histidine 40, lysine 68, asparagine 71, and threonine 72 each coordinate dUMP. Histidine 40 serves as the catalytic Proton acceptor. Intrachain disulfides connect cysteine 53-cysteine 109, cysteine 67-cysteine 120, cysteine 85-cysteine 135, and cysteine 92-cysteine 99. Residue histidine 144 is the Proton donor of the active site. Phenylalanine 145 is a dUMP binding site.

It belongs to the pancreatic ribonuclease family.

It localises to the secreted. Functionally, cleaves preferentially after uridine bases. Has antimicrobial activity against uropathogenic E.coli (UPEC). Probably contributes to urinary tract sterility. The sequence is that of Ribonuclease 4 (RNASE4) from Pan troglodytes (Chimpanzee).